The chain runs to 64 residues: Small ribosomal subunit protein eS17 (64 aa).

Belongs to the eukaryotic ribosomal protein eS17 family.

The sequence is that of Small ribosomal subunit protein eS17 from Methanosarcina mazei (strain ATCC BAA-159 / DSM 3647 / Goe1 / Go1 / JCM 11833 / OCM 88) (Methanosarcina frisia).